The sequence spans 421 residues: MLALHQTQRDVPCSEVHDALGLQGARSIYFGRPTGRSILSDPIRPRPMPTVTVIIYSDIRFLLEFPSVFLCAYVLPVQRTVIMANEKRGGYRQINQALNICAWEGYLNEQHARLPTLEDVEQISPRVLRVLGQNEGKVRRADGYYTCSSRLIEGPQFTLQGTNTYIVGTGRHRLLIDTGQGIPEWASLISSTLAGSSIELSHVLLTHWHGDHTGGVPDLLRMYPDLSDSIYKHTPGKGQKPISDGQTFRVEGATVRAVHTPGHSHDHMCFILEEENAMFTGDNVLGHGSSAVEVLSTWMSSLRMMQSLRCAVGYPAHGAVIRDLPSKLDLELTQKARREDRVVETLKQMKTETQRNGARGKGSVTVQQLVTAMHGHDLDEQVRTMALEPFVDEVLRKLAQDDRVAFEVRGGQKKWFAIEYT.

Residues His-207, His-209, Asp-211, and His-212 each coordinate Zn(2+). The Proton donor/acceptor role is filled by Asp-211.

Belongs to the metallo-beta-lactamase superfamily. Zn(2+) serves as cofactor. In terms of tissue distribution, specifically expressed in conidia.

The enzyme catalyses atrochrysone carboxyl-[ACP] + H2O = atrochrysone carboxylate + holo-[ACP] + H(+). It functions in the pathway secondary metabolite biosynthesis. In terms of biological role, atrochrysone carboxyl ACP thioesterase; part of the gene cluster that mediates the biosynthesis of trypacidin, a mycotoxin with antiprotozoal activity and that plays a role in the infection process. The pathway begins with the synthesis of atrochrysone thioester by the polyketide synthase (PKS) tpcC. The atrochrysone carboxyl ACP thioesterase tpcB then breaks the thioester bond and releases the atrochrysone carboxylic acid from tpcC. The decarboxylase tpcK converts atrochrysone carboxylic acid to atrochrysone which is further reduced into emodin anthrone. The next step is performed by the emodin anthrone oxygenase tpcL that catalyzes the oxidation of emodin anthrone to emodin. Emodin O-methyltransferase encoded by tpcA catalyzes methylation of the 8-hydroxy group of emodin to form questin. Ring cleavage of questin by questin oxidase tpcI leads to desmethylsulochrin via several intermediates including questin epoxide. Another methylation step catalyzed by tpcM leads to the formation of sulochrin which is further converted to monomethylsulfochrin by tpcH. Finally, the tpcJ catalyzes the conversion of monomethylsulfochrin to trypacidin. Trypacidin is toxic for human pulmonary and bronchial epithelial cells by initiating the intracellular formation of nitric oxide (NO) and hydrogen peroxide (H(2)O(2)), thus triggering host necrotic cell death. The trypacidin pathway is also able to produce endocrocin via a distinct route from the endocrocin Enc pathway. The sequence is that of Atrochrysone carboxyl ACP thioesterase from Aspergillus fumigatus (strain ATCC MYA-4609 / CBS 101355 / FGSC A1100 / Af293) (Neosartorya fumigata).